The chain runs to 209 residues: Chromophore lyase CpcT/CpeT 1 (209 aa).

This sequence belongs to the CpcT/CpeT biliprotein lyase family.

Its function is as follows. Covalently attaches a chromophore to Cys residue(s) of phycobiliproteins. This chain is Chromophore lyase CpcT/CpeT 1, found in Trichodesmium erythraeum (strain IMS101).